Reading from the N-terminus, the 424-residue chain is Type II methyltransferase M.BspRI (424 aa).

An SAM-dependent MTase C5-type domain is found at 58-408 (FNVLSLFCGA…KSIAQFAADY (351 aa)). The S-methylcysteine intermediate role is filled by cysteine 156. Cysteine 181 is subject to S-methylcysteine; by autocatalysis.

It belongs to the class I-like SAM-binding methyltransferase superfamily. C5-methyltransferase family. Monomer. In the absence of DNA, can self-methylate two cysteine residues.

It carries out the reaction a 2'-deoxycytidine in DNA + S-adenosyl-L-methionine = a 5-methyl-2'-deoxycytidine in DNA + S-adenosyl-L-homocysteine + H(+). Its function is as follows. A methylase, recognizes the double-stranded sequence 5'-GGCC-3', methylates C-3 on both strands, and protects the DNA from cleavage by the BspRI endonuclease. The sequence is that of Type II methyltransferase M.BspRI (bspRIM) from Lysinibacillus sphaericus (Bacillus sphaericus).